The chain runs to 491 residues: Pentatricopeptide repeat-containing protein At5g27460 (491 aa).

10 PPR repeats span residues 69–99 (SLSELRLISKRLIRSNRYDLALQMMEWMENQ), 105–139 (SVYDIALRLDLIIKTHGLKQGEEYFEKLLHSSVSM), 142–176 (AKSAYLPLLRAYVKNKMVKEAEALMEKLNGLGFLV), 177–211 (TPHPFNEMMKLYEASGQYEKVVMVVSMMKGNKIPR), 212–246 (NVLSYNLWMNACCEVSGVAAVETVYKEMVGDKSVE), 248–278 (GWSSLCTLANVYIKSGFDEKARLVLEDAEKM), 283–313 (NRLGYFFLITLYASLGNKEGVVRLWEVSKSV), 318–348 (SCVNYICVLSSLVKTGDLEEAERVFSEWEAQ), 353–387 (DVRVSNVLLGAYVRNGEIRKAESLHGCVLERGGTP), and 388–426 (NYKTWEILMEGWVKCENMEKAIDAMHQVFVLMRRCHWRP).

It belongs to the PPR family. P subfamily.

This is Pentatricopeptide repeat-containing protein At5g27460 from Arabidopsis thaliana (Mouse-ear cress).